Here is a 208-residue protein sequence, read N- to C-terminus: Uracil phosphoribosyltransferase (208 aa).

Residues arginine 78, arginine 103, and 130-138 (DPMLATGGS) contribute to the 5-phospho-alpha-D-ribose 1-diphosphate site. Uracil-binding positions include isoleucine 193 and 198-200 (GDA). Residue aspartate 199 coordinates 5-phospho-alpha-D-ribose 1-diphosphate.

The protein belongs to the UPRTase family. The cofactor is Mg(2+).

The catalysed reaction is UMP + diphosphate = 5-phospho-alpha-D-ribose 1-diphosphate + uracil. It participates in pyrimidine metabolism; UMP biosynthesis via salvage pathway; UMP from uracil: step 1/1. Allosterically activated by GTP. Catalyzes the conversion of uracil and 5-phospho-alpha-D-ribose 1-diphosphate (PRPP) to UMP and diphosphate. In Shewanella sp. (strain ANA-3), this protein is Uracil phosphoribosyltransferase.